Reading from the N-terminus, the 513-residue chain is Arabinoxylan arabinofuranohydrolase (513 aa).

Residues 1 to 26 (MRKKCSVCLWILVLLLSCLSGKSAYA) form the signal peptide. D50 serves as the catalytic Proton acceptor. The active-site Proton donor is the E251. Position 314 (N314) interacts with substrate. In terms of domain architecture, CBM6 spans 382–511 (NRVEAETFAW…LFNFDYWQFT (130 aa)). Ca(2+)-binding residues include E385, E387, N409, Q410, and D506.

It localises to the secreted. The catalysed reaction is Hydrolysis of terminal non-reducing alpha-L-arabinofuranoside residues in alpha-L-arabinosides.. Its pathway is glycan degradation; xylan degradation. In terms of biological role, cleaves arabinose units from O-2- or O-3-monosubstituted xylose residues, thereby assisting in arabinoxylan (AX) and short-chain arabinoxylo-oligosaccharide (AXOS) degradation. Is more active on wheat bran AXOS than on wheat water-extractable AX and rye water-extractable AX. Does not display endoxylanase, xylosidase or arabinanase activity. This chain is Arabinoxylan arabinofuranohydrolase (xynD), found in Bacillus subtilis (strain 168).